The sequence spans 491 residues: Protein nucleotidyltransferase YdiU (491 aa).

ATP contacts are provided by Gly94, Gly96, Arg97, Lys117, Asp129, Gly130, Arg180, and Arg187. Catalysis depends on Asp256, which acts as the Proton acceptor. The Mg(2+) site is built by Asn257 and Asp266. Residue Asp266 coordinates ATP.

It belongs to the SELO family. Mg(2+) serves as cofactor. Mn(2+) is required as a cofactor.

It catalyses the reaction L-seryl-[protein] + ATP = 3-O-(5'-adenylyl)-L-seryl-[protein] + diphosphate. The enzyme catalyses L-threonyl-[protein] + ATP = 3-O-(5'-adenylyl)-L-threonyl-[protein] + diphosphate. It carries out the reaction L-tyrosyl-[protein] + ATP = O-(5'-adenylyl)-L-tyrosyl-[protein] + diphosphate. The catalysed reaction is L-histidyl-[protein] + UTP = N(tele)-(5'-uridylyl)-L-histidyl-[protein] + diphosphate. It catalyses the reaction L-seryl-[protein] + UTP = O-(5'-uridylyl)-L-seryl-[protein] + diphosphate. The enzyme catalyses L-tyrosyl-[protein] + UTP = O-(5'-uridylyl)-L-tyrosyl-[protein] + diphosphate. In terms of biological role, nucleotidyltransferase involved in the post-translational modification of proteins. It can catalyze the addition of adenosine monophosphate (AMP) or uridine monophosphate (UMP) to a protein, resulting in modifications known as AMPylation and UMPylation. This chain is Protein nucleotidyltransferase YdiU, found in Brevibacillus brevis (strain 47 / JCM 6285 / NBRC 100599).